A 163-amino-acid chain; its full sequence is Glycine cleavage system H-like protein gcvH5, mitochondrial (163 aa).

The transit peptide at M1–Y23 directs the protein to the mitochondrion. Residues I50–K136 enclose the Lipoyl-binding domain.

Belongs to the GcvH family.

The protein localises to the mitochondrion. This Dictyostelium discoideum (Social amoeba) protein is Glycine cleavage system H-like protein gcvH5, mitochondrial (gcvH5).